We begin with the raw amino-acid sequence, 292 residues long: ATP synthase gamma chain (292 aa).

The protein belongs to the ATPase gamma chain family. As to quaternary structure, F-type ATPases have 2 components, CF(1) - the catalytic core - and CF(0) - the membrane proton channel. CF(1) has five subunits: alpha(3), beta(3), gamma(1), delta(1), epsilon(1). CF(0) has three main subunits: a, b and c.

It localises to the cell inner membrane. Produces ATP from ADP in the presence of a proton gradient across the membrane. The gamma chain is believed to be important in regulating ATPase activity and the flow of protons through the CF(0) complex. In Nitrobacter hamburgensis (strain DSM 10229 / NCIMB 13809 / X14), this protein is ATP synthase gamma chain.